Consider the following 303-residue polypeptide: UDP-N-acetylenolpyruvoylglucosamine reductase (303 aa).

The FAD-binding PCMH-type domain maps to 29–196 (KIGGPADVLV…LEAVLQLEQK (168 aa)). Arginine 174 is an active-site residue. Serine 225 functions as the Proton donor in the catalytic mechanism. Residue glutamate 295 is part of the active site.

It belongs to the MurB family. Requires FAD as cofactor.

It localises to the cytoplasm. The enzyme catalyses UDP-N-acetyl-alpha-D-muramate + NADP(+) = UDP-N-acetyl-3-O-(1-carboxyvinyl)-alpha-D-glucosamine + NADPH + H(+). Its pathway is cell wall biogenesis; peptidoglycan biosynthesis. Cell wall formation. The sequence is that of UDP-N-acetylenolpyruvoylglucosamine reductase from Bacillus licheniformis (strain ATCC 14580 / DSM 13 / JCM 2505 / CCUG 7422 / NBRC 12200 / NCIMB 9375 / NCTC 10341 / NRRL NRS-1264 / Gibson 46).